The sequence spans 493 residues: Betaine aldehyde dehydrogenase (493 aa).

K(+) is bound by residues S32, I33, and D99. 156 to 158 (GAW) is a binding site for NAD(+). The active-site Charge relay system is the K168. Residues 182-185 (KPSE) and 235-238 (SVPT) each bind NAD(+). K(+) is bound at residue L250. E256 serves as the catalytic Proton acceptor. Residues G258, C290, and E390 each coordinate NAD(+). Catalysis depends on C290, which acts as the Nucleophile. Cysteine sulfenic acid (-SOH) is present on C290. The K(+) site is built by K460 and G463. The active-site Charge relay system is E467.

The protein belongs to the aldehyde dehydrogenase family. Dimer of dimers. K(+) is required as a cofactor.

The catalysed reaction is betaine aldehyde + NAD(+) + H2O = glycine betaine + NADH + 2 H(+). It functions in the pathway amine and polyamine biosynthesis; betaine biosynthesis via choline pathway; betaine from betaine aldehyde: step 1/1. Functionally, involved in the biosynthesis of the osmoprotectant glycine betaine. Catalyzes the irreversible oxidation of betaine aldehyde to the corresponding acid. In Agrobacterium fabrum (strain C58 / ATCC 33970) (Agrobacterium tumefaciens (strain C58)), this protein is Betaine aldehyde dehydrogenase.